Here is a 643-residue protein sequence, read N- to C-terminus: MLASQAIKRIFHRSWKPLVRFNHGKAPTAIESIKKRIEDIPIENYRNFSIVAHIDHGKSTLSDRLLELTGVIQSGGNKQVLDRLEVERERGITVKAQTCTMFYHDKRYGKDFLIHLVDTPGHVDFRGEVSRSYASCGGALLLVDASQGVQAQTVANFYLAYSMNLKLIPVINKIDLDHADIAQAEDQIENTFELPKEDTIRVSAKTGLNVKEDLLPAIIDRIPPPTGCLDKPFRALLVDSWYDSYVGVVLLVHIVDGTVRKGDKVSSAQTGKKYEIKEIGIMFPDRTPTGILSTGQVGYVVPGMKASKDAKIGDTLMHLGREQETEVLPGFEEPKPMVFVGAFPSDGEEFKALNDDVNRLVLNDRSVSLKRETSNALGQGWRLGFLGSLHASVFRERLENEYGSKLIITQPTVPYMIKYYDGHERLITNPDEFPDLAERRNKVQAIQEPYVEAIMTLPQEYLGNVIKLCDHNRGQQTEITYLNMTGQVMLKYDLPLGQLVEDFFGKLKSVSRGYASLDYEDIGYRDSDVVKLELLINGSSVDALAQVMHSSQVERVGRAWVKKFKEYIKAQLFEVVIQARANSKIIARETIKAKRKDVLQKLHASDISRRKKLLVKQKEGKKHLKSVGNVQINQDAYQAFLRR.

The transit peptide at 1 to 18 (MLASQAIKRIFHRSWKPL) directs the protein to the mitochondrion. Residues 43–226 (ENYRNFSIVA…AIIDRIPPPT (184 aa)) enclose the tr-type G domain. Residues 52–59 (AHIDHGKS), 118–122 (DTPGH), and 172–175 (NKID) contribute to the GTP site.

Belongs to the TRAFAC class translation factor GTPase superfamily. Classic translation factor GTPase family. LepA subfamily.

Its subcellular location is the mitochondrion inner membrane. The catalysed reaction is GTP + H2O = GDP + phosphate + H(+). In terms of biological role, promotes mitochondrial protein synthesis. May act as a fidelity factor of the translation reaction, by catalyzing a one-codon backward translocation of tRNAs on improperly translocated ribosomes. Binds to mitochondrial ribosomes in a GTP-dependent manner. This chain is Translation factor GUF1, mitochondrial, found in Zygosaccharomyces rouxii (strain ATCC 2623 / CBS 732 / NBRC 1130 / NCYC 568 / NRRL Y-229).